A 212-amino-acid chain; its full sequence is uncharacterized protein (212 aa).

S-adenosyl-L-methionine contacts are provided by Gly-53, Glu-74, and Asp-97.

The protein belongs to the methyltransferase superfamily. YrrT family.

Functionally, could be a S-adenosyl-L-methionine-dependent methyltransferase. This is an uncharacterized protein from Bacillus thuringiensis (strain Al Hakam).